The primary structure comprises 168 residues: G/U mismatch-specific DNA glycosylase (168 aa).

This sequence belongs to the uracil-DNA glycosylase (UDG) superfamily. TDG/mug family. As to quaternary structure, binds DNA as a monomer.

The protein localises to the cytoplasm. The catalysed reaction is Specifically hydrolyzes mismatched double-stranded DNA and polynucleotides, releasing free uracil.. Excises ethenocytosine and uracil, which can arise by alkylation or deamination of cytosine, respectively, from the corresponding mispairs with guanine in ds-DNA. It is capable of hydrolyzing the carbon-nitrogen bond between the sugar-phosphate backbone of the DNA and the mispaired base. The complementary strand guanine functions in substrate recognition. Required for DNA damage lesion repair in stationary-phase cells. In Salmonella choleraesuis (strain SC-B67), this protein is G/U mismatch-specific DNA glycosylase.